The following is a 426-amino-acid chain: Glutamate-1-semialdehyde 2,1-aminomutase (426 aa).

Residue lysine 265 is modified to N6-(pyridoxal phosphate)lysine.

The protein belongs to the class-III pyridoxal-phosphate-dependent aminotransferase family. HemL subfamily. In terms of assembly, homodimer. Pyridoxal 5'-phosphate serves as cofactor.

The protein localises to the cytoplasm. It carries out the reaction (S)-4-amino-5-oxopentanoate = 5-aminolevulinate. It functions in the pathway porphyrin-containing compound metabolism; protoporphyrin-IX biosynthesis; 5-aminolevulinate from L-glutamyl-tRNA(Glu): step 2/2. This chain is Glutamate-1-semialdehyde 2,1-aminomutase, found in Yersinia pseudotuberculosis serotype O:1b (strain IP 31758).